A 39-amino-acid polypeptide reads, in one-letter code: Photosystem I reaction center subunit IX (39 aa).

Residues 7-27 (FLTTAPVAFILFSSFVFALFI) form a helical membrane-spanning segment.

The protein belongs to the PsaJ family.

The protein resides in the cellular thylakoid membrane. Its function is as follows. May help in the organization of the PsaE and PsaF subunits. This Synechococcus sp. (strain JA-3-3Ab) (Cyanobacteria bacterium Yellowstone A-Prime) protein is Photosystem I reaction center subunit IX.